A 364-amino-acid polypeptide reads, in one-letter code: Heavy metal-associated isoprenylated plant protein 35 (364 aa).

Residues 1–12 (MATDEMKSETKK) show a composition bias toward basic and acidic residues. Residues 1–33 (MATDEMKSETKKTEHKQKQSTQIKQDLPPPTIP) are disordered. The HMA domain maps to 39 to 102 (YKSCTLKVSI…KLNKAGKNAE (64 aa)). Positions 50 and 53 each coordinate a metal cation. The interval 101–265 (AEQLPEIPDP…PPTATDYDRP (165 aa)) is disordered. Positions 111–122 (VDNKPKPVDPKE) are enriched in basic and acidic residues. Residues 134–144 (QITNEATSSGI) show a composition bias toward polar residues. Basic and acidic residues-rich tracts occupy residues 154–169 (ECDKPESEKPVDEKCL) and 180–198 (VKEEKKDVLKEKDSGKEES). Polar residues predominate over residues 237–253 (SLATTNNPTDGPARTQS). Cysteine 361 carries the cysteine methyl ester modification. Residue cysteine 361 is the site of S-farnesyl cysteine attachment. The propeptide at 362–364 (AIM) is removed in mature form.

Belongs to the HIPP family.

Heavy-metal-binding protein. This chain is Heavy metal-associated isoprenylated plant protein 35, found in Arabidopsis thaliana (Mouse-ear cress).